Consider the following 134-residue polypeptide: Small ribosomal subunit protein uS9 (134 aa).

Residues 113–134 (REVERKKYGLKKARRAPQFSKR) form a disordered region. Basic residues predominate over residues 120 to 134 (YGLKKARRAPQFSKR).

This sequence belongs to the universal ribosomal protein uS9 family.

This is Small ribosomal subunit protein uS9 from Thermotoga petrophila (strain ATCC BAA-488 / DSM 13995 / JCM 10881 / RKU-1).